A 129-amino-acid polypeptide reads, in one-letter code: Protein BEX2 (129 aa).

The tract at residues 1–38 is disordered; it reads MESKVEQGVKNLNMENDHQEKEEKEEKPQDANKREPVV. The span at 15–36 shows a compositional bias: basic and acidic residues; the sequence is ENDHQEKEEKEEKPQDANKREP. Arg-51 is subject to Omega-N-methylarginine. The disordered stretch occupies residues 108-129; it reads SLRAVSTDPPHHDHHDEFCLMP. The segment covering 116 to 129 has biased composition (basic and acidic residues); that stretch reads PPHHDHHDEFCLMP. The segment at 118–122 is his cluster; the sequence is HHDHH. Position 126 (Cys-126) interacts with Zn(2+).

The protein belongs to the BEX family. Interacts with LMO2, possibly leading to regulate the transcriptional activity of a DNA-binding complex containing LMO2. Interacts with OMP.

It is found in the nucleus. Its subcellular location is the cytoplasm. In terms of biological role, regulator of mitochondrial apoptosis and G1 cell cycle. Regulates the level of PP2A regulatory subunit B and PP2A phosphatase activity. In absence of reductive stress, acts as a pseudosubstrate for the CRL2(FEM1B) complex: associates with FEM1B via zinc, thereby preventing association between FEM1B and its substrates. This is Protein BEX2 (Bex2) from Rattus norvegicus (Rat).